Reading from the N-terminus, the 192-residue chain is dTTP/UTP pyrophosphatase (192 aa).

The Proton acceptor role is filled by Asp-75.

This sequence belongs to the Maf family. YhdE subfamily. A divalent metal cation serves as cofactor.

Its subcellular location is the cytoplasm. It catalyses the reaction dTTP + H2O = dTMP + diphosphate + H(+). It carries out the reaction UTP + H2O = UMP + diphosphate + H(+). In terms of biological role, nucleoside triphosphate pyrophosphatase that hydrolyzes dTTP and UTP. May have a dual role in cell division arrest and in preventing the incorporation of modified nucleotides into cellular nucleic acids. In Bdellovibrio bacteriovorus (strain ATCC 15356 / DSM 50701 / NCIMB 9529 / HD100), this protein is dTTP/UTP pyrophosphatase.